Consider the following 205-residue polypeptide: Large ribosomal subunit protein uL3 (205 aa).

The protein belongs to the universal ribosomal protein uL3 family. In terms of assembly, part of the 50S ribosomal subunit. Forms a cluster with proteins L14 and L19.

Its function is as follows. One of the primary rRNA binding proteins, it binds directly near the 3'-end of the 23S rRNA, where it nucleates assembly of the 50S subunit. This chain is Large ribosomal subunit protein uL3, found in Flavobacterium johnsoniae (strain ATCC 17061 / DSM 2064 / JCM 8514 / BCRC 14874 / CCUG 350202 / NBRC 14942 / NCIMB 11054 / UW101) (Cytophaga johnsonae).